A 642-amino-acid polypeptide reads, in one-letter code: Bud site selection protein 5 (642 aa).

An N-terminal Ras-GEF domain is found at 224-339 (EVFRIQLYLN…DIVQLFINKK (116 aa)). Positions 412-640 (SPWSLAKTLT…YQVSIAKVPR (229 aa)) constitute a Ras-GEF domain.

In terms of assembly, interacts with AXL2, BEM1, GSP1 and in haploid cells with AXL1.

The protein localises to the bud neck. It is found in the cytoplasm. Its subcellular location is the cell cortex. GDP-GTP exchange factor (GEF) for the small GTPase BUD1/RSR1. Regulates the activity of BUD1 together with BUD2 which is a GTPase-activating protein (GAP) of BUD1. Required to produce both the axial and bipolar patterns of bud site selection. Determines the orientation of division axis. Overexpression can suppress mutations in PRP20 which is the GEF for GSP1. May be a cytoplasmic GEF for GSP1. Might also act on the Ras-like protein CDC42. Appears to bind to Ras proteins but not to activate them. This is Bud site selection protein 5 (BUD5) from Saccharomyces cerevisiae (strain ATCC 204508 / S288c) (Baker's yeast).